Here is a 330-residue protein sequence, read N- to C-terminus: Type I restriction enzyme MpnII specificity subunit (330 aa).

The protein belongs to the type-I restriction system S methylase family. In terms of assembly, the methyltransferase is composed of M and S polypeptides.

The specificity (S) subunit of a type I restriction enzyme; this subunit dictates DNA sequence specificity. The M and S subunits together form a methyltransferase (MTase) that probably methylates A-2 on the top strand and A-3 on the bottom strand of the sequence 5'-GAN(7)TAY-3'. As the bacterial DNA is methylated on this sequence and this is the only type I methylase in the genome, it is probably responsible for all of the methylation on this site in the genome. The R subunit has multiple frameshifts and is probably not expressed in this bacteria. In Mycoplasma pneumoniae (strain ATCC 29342 / M129 / Subtype 1) (Mycoplasmoides pneumoniae), this protein is Type I restriction enzyme MpnII specificity subunit.